Consider the following 235-residue polypeptide: Protein LIFEGUARD 1 (235 aa).

The next 7 membrane-spanning stretches (helical) occupy residues 33 to 53 (YSIL…VYFV), 67 to 87 (LAVF…LLAF), 95 to 115 (CIVL…CCSL), 120 to 140 (IVLE…IYTF), 149 to 169 (FSFL…FTLL), 178 to 198 (LSSM…IIFD), and 212 to 232 (ITAA…LLGI).

Belongs to the BI1 family. As to expression, expressed at very low in leaves.

The protein resides in the membrane. Its function is as follows. (Microbial infection) Facilitates the development of the powdery mildew fungus E.cruciferarum. Functionally, (Microbial infection) May prevent cell death upon A.alternata f.sp. lycopersici (AAL) toxin treatment. This chain is Protein LIFEGUARD 1, found in Arabidopsis thaliana (Mouse-ear cress).